Consider the following 400-residue polypeptide: CCA-adding enzyme (400 aa).

Gly-28 and Arg-31 together coordinate ATP. CTP-binding residues include Gly-28 and Arg-31. Residues Asp-41 and Asp-43 each coordinate Mg(2+). Residues Arg-112, Asp-155, Arg-158, Arg-161, and Arg-164 each contribute to the ATP site. Residues Arg-112, Asp-155, Arg-158, Arg-161, and Arg-164 each contribute to the CTP site.

It belongs to the tRNA nucleotidyltransferase/poly(A) polymerase family. Bacterial CCA-adding enzyme type 3 subfamily. As to quaternary structure, homodimer. Requires Mg(2+) as cofactor.

It catalyses the reaction a tRNA precursor + 2 CTP + ATP = a tRNA with a 3' CCA end + 3 diphosphate. The catalysed reaction is a tRNA with a 3' CCA end + 2 CTP + ATP = a tRNA with a 3' CCACCA end + 3 diphosphate. Functionally, catalyzes the addition and repair of the essential 3'-terminal CCA sequence in tRNAs without using a nucleic acid template. Adds these three nucleotides in the order of C, C, and A to the tRNA nucleotide-73, using CTP and ATP as substrates and producing inorganic pyrophosphate. tRNA 3'-terminal CCA addition is required both for tRNA processing and repair. Also involved in tRNA surveillance by mediating tandem CCA addition to generate a CCACCA at the 3' terminus of unstable tRNAs. While stable tRNAs receive only 3'-terminal CCA, unstable tRNAs are marked with CCACCA and rapidly degraded. The polypeptide is CCA-adding enzyme (Staphylococcus aureus (strain MRSA252)).